A 244-amino-acid polypeptide reads, in one-letter code: Ureidoacrylate amidohydrolase RutB (244 aa).

The active-site Proton acceptor is Asp-38. Lys-147 is a catalytic residue. The Nucleophile role is filled by Cys-180.

The protein belongs to the isochorismatase family. RutB subfamily.

The catalysed reaction is (Z)-3-ureidoacrylate + H2O + H(+) = (Z)-3-aminoacrylate + NH4(+) + CO2. It catalyses the reaction (Z)-3-ureidoacrylate + H2O = (Z)-3-aminoacrylate + carbamate + H(+). The enzyme catalyses (Z)-2-methylureidoacrylate + H2O + H(+) = (Z)-2-methylaminoacrylate + NH4(+) + CO2. In terms of biological role, hydrolyzes ureidoacrylate to form aminoacrylate and carbamate. The carbamate hydrolyzes spontaneously, thereby releasing one of the nitrogen atoms of the pyrimidine ring as ammonia and one of its carbon atoms as CO2. This is Ureidoacrylate amidohydrolase RutB from Escherichia coli O55:H7 (strain CB9615 / EPEC).